The primary structure comprises 419 residues: Keratin, type II cytoskeletal I (419 aa).

Residues 1-16 (KGSTKRANLDPLFEKY) are linker 1. The IF rod domain maps to 1–275 (KGSTKRANLD…YMLEGEEGRM (275 aa)). Residues 17–108 (ISDLKRYLDN…TLFAAELSQV (92 aa)) form a coil 1B region. The interval 109–132 (HDQVTDTSVVLTMDNNRDLNLDSI) is linker 12. Residues 133-271 (IKEVKCQYEQ…STYRYMLEGE (139 aa)) form a coil 2 region. Residues 272-419 (EGRMSGQISN…STTSTTKRSY (148 aa)) are tail.

The protein belongs to the intermediate filament family. As to quaternary structure, heterotetramer of two type I and two type II keratins.

In Xenopus laevis (African clawed frog), this protein is Keratin, type II cytoskeletal I.